Consider the following 160-residue polypeptide: Phosphopantetheine adenylyltransferase (160 aa).

A substrate-binding site is contributed by Thr10. ATP-binding positions include 10–11 and His18; that span reads TF. Residues Lys42, Met74, and Arg88 each contribute to the substrate site. ATP contacts are provided by residues 89 to 91, Glu99, and 124 to 130; these read GVR and WSYISST.

This sequence belongs to the bacterial CoaD family. In terms of assembly, homohexamer. Mg(2+) is required as a cofactor.

It is found in the cytoplasm. The catalysed reaction is (R)-4'-phosphopantetheine + ATP + H(+) = 3'-dephospho-CoA + diphosphate. The protein operates within cofactor biosynthesis; coenzyme A biosynthesis; CoA from (R)-pantothenate: step 4/5. Functionally, reversibly transfers an adenylyl group from ATP to 4'-phosphopantetheine, yielding dephospho-CoA (dPCoA) and pyrophosphate. This Sodalis glossinidius (strain morsitans) protein is Phosphopantetheine adenylyltransferase.